Consider the following 736-residue polypeptide: Phosphoribosylformylglycinamidine synthase subunit PurL (736 aa).

H49 is a catalytic residue. Residues Y52 and K91 each coordinate ATP. Mg(2+) is bound at residue E93. Substrate is bound by residues 94 to 97 (SHNH) and R116. Catalysis depends on H95, which acts as the Proton acceptor. D117 contacts Mg(2+). Residue Q240 coordinates substrate. D268 contributes to the Mg(2+) binding site. Residue 312–314 (ESQ) participates in substrate binding. Positions 493 and 530 each coordinate ATP. Position 531 (N531) interacts with Mg(2+). S533 provides a ligand contact to substrate.

Belongs to the FGAMS family. In terms of assembly, monomer. Part of the FGAM synthase complex composed of 1 PurL, 1 PurQ and 2 PurS subunits.

It localises to the cytoplasm. The catalysed reaction is N(2)-formyl-N(1)-(5-phospho-beta-D-ribosyl)glycinamide + L-glutamine + ATP + H2O = 2-formamido-N(1)-(5-O-phospho-beta-D-ribosyl)acetamidine + L-glutamate + ADP + phosphate + H(+). Its pathway is purine metabolism; IMP biosynthesis via de novo pathway; 5-amino-1-(5-phospho-D-ribosyl)imidazole from N(2)-formyl-N(1)-(5-phospho-D-ribosyl)glycinamide: step 1/2. In terms of biological role, part of the phosphoribosylformylglycinamidine synthase complex involved in the purines biosynthetic pathway. Catalyzes the ATP-dependent conversion of formylglycinamide ribonucleotide (FGAR) and glutamine to yield formylglycinamidine ribonucleotide (FGAM) and glutamate. The FGAM synthase complex is composed of three subunits. PurQ produces an ammonia molecule by converting glutamine to glutamate. PurL transfers the ammonia molecule to FGAR to form FGAM in an ATP-dependent manner. PurS interacts with PurQ and PurL and is thought to assist in the transfer of the ammonia molecule from PurQ to PurL. This chain is Phosphoribosylformylglycinamidine synthase subunit PurL, found in Rhodopseudomonas palustris (strain BisB18).